The sequence spans 1153 residues: Bifunctional dioxygenase (DOX)-epoxy alcohol synthase (EAS) (1153 aa).

Positions 46-56 are enriched in low complexity; sequence SSKESPSRKSS. The disordered stretch occupies residues 46–113; the sequence is SSKESPSRKS…TQHGDGTYPT (68 aa). Polar residues predominate over residues 57–74; it reads TIGQSTRNGSCQADTQKG. The segment covering 81–98 has biased composition (basic and acidic residues); it reads EKPKPVKENPMKKLKEMS. A fatty acid alpha-dioxygenase region spans residues 177 to 525; that stretch reads TDSLINELWE…DGKFDDDDLV (349 aa). H276 is a binding site for heme b. Residue Y454 is part of the active site. H457 serves as a coordination point for heme b. The segment at 732-1153 is epoxy alcohol synthase; the sequence is RVNITSYGGA…VTMRVMWDDE (422 aa). C1086 is a heme binding site.

The protein in the N-terminal section; belongs to the peroxidase family. It in the C-terminal section; belongs to the cytochrome P450 family. Homotetramer. Requires heme b as cofactor. The cofactor is heme.

The catalysed reaction is (9Z)-octadecenoate + O2 = (8R)-hydroperoxy-(9Z)-octadecenoate. It carries out the reaction (9Z)-octadecenoate + O2 = 10-hydroperoxy-(8E)-octadecenoate. The enzyme catalyses (9Z,12Z)-octadecadienoate + O2 = (8E,10R,12Z)-10-hydroperoxyoctadeca-8,12-dienoate. It catalyses the reaction (9Z,12Z,15Z)-octadecatrienoate + O2 = (10R)-hydroperoxy-(8E,12Z,15Z)-octadecatrienoate. The catalysed reaction is (9Z,12Z,15Z)-octadecatrienoate + O2 = (8R)-hydroperoxy-(9Z,12Z,15Z)-octadecatrienoate. It carries out the reaction (11Z,14Z)-eicosadienoate + O2 = 12-hydroperoxy-(10E,14Z)-eicosadienoate. The enzyme catalyses (11Z,14Z,17Z)-eicosatrienoate + O2 = 12-hydroperoxy-(10E,14Z,17Z)-eicosatrienoate. It catalyses the reaction (12R,13S)-epoxy-(9Z)-octadecenoate + O2 = (12R,13S)-epoxy-(10R)-hydroperoxy-(8E)-octadecenoate. The catalysed reaction is (8E,10R,12Z)-10-hydroperoxyoctadeca-8,12-dienoate = (12S,13R)-epoxy-(10R)-hydroxy-(8E)-octadecenoate. It carries out the reaction (10R)-hydroperoxy-(8E,12Z,15Z)-octadecatrienoate = 12,13-epoxy-(10R)-hydroxy-(8E,15Z)-octadecadienoate. The enzyme catalyses 12-hydroperoxy-(10E,14Z)-eicosadienoate = 10,11-epoxy-12-hydroxy-(14Z)-eicosenoate. It catalyses the reaction 12-hydroperoxy-(10E,14Z,17Z)-eicosatrienoate = 14,15-epoxy-12-hydroxy-(10E,17Z)-eicosadienoate. The catalysed reaction is (13R)-hydroperoxy-(9Z,11E)-octadecadienoate = (12R,13R)-epoxy-(11S)-hydroxy-(9Z)-octadecenoate. It carries out the reaction (13S)-hydroperoxy-(9Z,11E)-octadecadienoate = (12R,13R)-epoxy-(11S)-hydroxy-(9Z)-octadecenoate. The enzyme catalyses 12-hydroperoxy-(10E,14Z)-eicosadienoate = 14,15-epoxy-12-hydroxy-(10E)-eicosenoate. It catalyses the reaction 12-hydroperoxy-(10E,14Z,17Z)-eicosatrienoate = 10,11-epoxy-12-hydroxy-(14Z,17Z)-eicosadienoate. Bifunctional dioxygenase (DOX)-epoxy alcohol synthase (EAS) that converts linoleic acid (18:2n-6) sequentially to 10(R)-hydroperoxy-8(E),12(Z)-octadecadienoic acid (10R-HPODE) and 10R-HPODE further to 12 S(13R)-epoxy-10(R)-hydroxy-8(E)-octadecenoic acid as the end product. Oxygenation at C-10 occurs by retention of the pro-R hydrogen of C-8 of 18:2n-6, suggesting antarafacial hydrogen abstraction and oxygenation. The epoxy alcohol is formed from 10R-HPODE, likely by heterolytic cleavage of the dioxygen bond and subsequent intramolecular epoxidation of the 12(Z) double bond. The DOX domain is also able to oxygenate position C-8 of linoleic acid to produce 8(R)-hydroperoxy-8(E),12(Z)-octadecadienoic acid (8R-HPODE). Moreover, the DOX domain can oxygenate alpha-linolenic acid (18:3n-3) at C-8 or C-10 to produce respectively 8HOTrE and 10HOTrE, oleic acid (18:1n-9) at C-8 or C-10 to produce respectively 8-H(P)OME and 10-H(P)OME (with 8R stereoisomer to over 95%), eicosadienoic acid (20:2n-6) at C-10 or C-12 to produce respectively 10(11)-epoxy-12-hydroxy-14(Z)-eicosenoic acid and 14(15)-epoxy-12-hydroxy-10(E)-eicosenoic acid, as well as eicosatrienoic acid (20:3n-3) at C-10 or C-12 to produce respectively 10(11)-epoxy-12-hydroxy-14(Z),17(Z)-eicosadienoic acid and 14(15)-epoxy-12-hydroxy-14(Z),17(Z)-eicosadienoic acid. On the other side, the enzyme EAS domain can also catalyze the conversion of 10HOTrE into 12(13)-epoxy-10(R)-hydroxy-8(E),15(Z)-octadecadienoic acid, 13-R-HPODE into the stereoisomers of 12(13)-epoxy-11-hydroxy-9(Z)-octadecenoic acids (erythro/threo, 1:4), as well as 13S-HPODE into the stereoisomers of 12(13)-epoxy-11-hydroxy-9(Z)-octadecenoic acids (erythro/threo, 1:4) (EAS activity). Gamma-linolenic acid (18:3n-6) is not a substrate. In Pyricularia oryzae (strain 70-15 / ATCC MYA-4617 / FGSC 8958) (Rice blast fungus), this protein is Bifunctional dioxygenase (DOX)-epoxy alcohol synthase (EAS).